Here is a 496-residue protein sequence, read N- to C-terminus: MTCFTRVGVSCGLFFFLLGAQLQLIRCIRKDVLAGRLENVTQTISNILQGYDIRLRPNFGGEPLHVGMDLTIASFDAISEVNMDYTITMYLNQYWRDERLAFNIFGQYFDDENDDGISDVLTLSGDFAEKIWVPDTFFANDKNSFLHDVTERNKLVRLGGDGAVTYGMRFTTTLACMMDLHYYPLDSQNCTVEIESYGYTVSDVVMYWKPTPVRGVEDAELPQFTIIGYETNDRKERLATGVYQRLSLSFKLQRNIGYFVFQTYLPSILIVMLSWVSFWINHEATSARVALGITTVLTMTTISTGVRSSLPRISYVKAIDIYLVMCFVFVFAALLEYAAVNYTYWGKRAKKKIKKVKECCPGKIGKSERSETCSTTEDIIELQDVRMSPIPSLRRGTYNATLDSIGTETMNLGKFPPSFRITRNYGTGHSQLRRRAQRGISTRPRMLHALKRGASAIKATIPKIKDVNIIDKYSRMIFPISFLAFNLGYWLFYILE.

The or 27 signal peptide spans 1–20 (MTCFTRVGVSCGLFFFLLGA). Residues 21 to 258 (QLQLIRCIRK…SFKLQRNIGY (238 aa)) lie on the Extracellular side of the membrane. N-linked (GlcNAc...) asparagine glycosylation is found at asparagine 39 and asparagine 189. A disulfide bridge links cysteine 176 with cysteine 190. 3 helical membrane-spanning segments follow: residues 259-280 (FVFQ…SFWI), 285-306 (TSAR…STGV), and 318-342 (AIDI…AVNY). Residues 343-472 (TYWGKRAKKK…KIKDVNIIDK (130 aa)) are Cytoplasmic-facing. The chain crosses the membrane as a helical span at residues 473-494 (YSRMIFPISFLAFNLGYWLFYI).

This sequence belongs to the ligand-gated ion channel (TC 1.A.9) family. Gamma-aminobutyric acid receptor (TC 1.A.9.5) subfamily. Generally pentameric. There are five types of GABA(A) receptor chains: alpha, beta, gamma, delta, and rho. Interacts with Grd (alpha chain).

Its subcellular location is the postsynaptic cell membrane. It localises to the cell membrane. Functionally, GABA, an inhibitory neurotransmitter, mediates neuronal inhibition by binding to the GABA receptor and opening an integral chloride channel. Combines with the ligand-gated ion channel subunit GRD to form cation-selective GABA-gated ion channels when coexpressed in Xenopus laevis oocytes. The sequence is that of Gamma-aminobutyric acid receptor subunit beta-like (Lcch3) from Drosophila melanogaster (Fruit fly).